Here is a 126-residue protein sequence, read N- to C-terminus: SH2 domain-containing protein 1A (126 aa).

The region spanning 6 to 104 (VYHGKISRET…VTPLQYPVEK (99 aa)) is the SH2 domain. The segment at 67–92 (ETAPGVHKRFFRKVKNLISAFQKPDQ) is interaction with FYN SH3 domain. Lys-89 carries the N6-acetyllysine modification. The interval 100–126 (YPVEKSSGRGPQAPTGRRDSDICLNAP) is disordered.

As to quaternary structure, interacts with CD84, CD244, LY9, SLAMF1 and FYN. Interacts with NTRK1, NTRK2 and NTRK3. In terms of tissue distribution, T-cells.

The protein localises to the cytoplasm. Functionally, cytoplasmic adapter regulating receptors of the signaling lymphocytic activation molecule (SLAM) family such as SLAMF1, CD244, LY9, CD84, SLAMF6 and SLAMF7. In SLAM signaling seems to cooperate with SH2D1B/EAT-2. Initially it has been proposed that association with SLAMF1 prevents SLAMF1 binding to inhibitory effectors including INPP5D/SHIP1 and PTPN11/SHP-2. However, by simultaneous interactions, recruits FYN which subsequently phosphorylates and activates SLAMF1. Positively regulates CD244/2B4- and CD84-mediated natural killer (NK) cell functions. Can also promote CD48-, SLAMF6 -, LY9-, and SLAMF7-mediated NK cell activation. In the context of NK cell-mediated cytotoxicity enhances conjugate formation with target cells. May also regulate the activity of the neurotrophin receptors NTRK1, NTRK2 and NTRK3. This Mus musculus (Mouse) protein is SH2 domain-containing protein 1A (Sh2d1a).